We begin with the raw amino-acid sequence, 205 residues long: RNA pyrophosphohydrolase (205 aa).

The Nudix hydrolase domain occupies 6 to 149 (GFRPNVGIVL…KRGVYARALR (144 aa)). The short motif at 38-59 (GGMNTDETPVEAMYRELREETG) is the Nudix box element. Residues 177 to 205 (PGSSAAGHDSPRKRPRKRSGARPMRINND) are disordered. Positions 187 to 196 (PRKRPRKRSG) are enriched in basic residues.

Belongs to the Nudix hydrolase family. RppH subfamily. A divalent metal cation serves as cofactor.

Functionally, accelerates the degradation of transcripts by removing pyrophosphate from the 5'-end of triphosphorylated RNA, leading to a more labile monophosphorylated state that can stimulate subsequent ribonuclease cleavage. The protein is RNA pyrophosphohydrolase of Xanthomonas oryzae pv. oryzae (strain MAFF 311018).